We begin with the raw amino-acid sequence, 618 residues long: C2H2 finger domain transcription factor sebA (618 aa).

The segment at 394–488 is disordered; sequence GDATQSTEEM…RGRKQSLTDD (95 aa). A compositionally biased stretch (basic residues) spans 406 to 416; the sequence is KKRVTSRRSLK. Low complexity-rich tracts occupy residues 417-432 and 443-458; these read KAST…AKKT and SDTT…SSRQ. A compositionally biased stretch (polar residues) spans 459-469; the sequence is NSTANTSNSES. 2 C2H2-type zinc fingers span residues 493–516 and 522–544; these read FVCS…RSLH and FECH…ARTH. Low complexity predominate over residues 582–597; the sequence is NAATSKSTTSESSDGT. The segment at 582 to 618 is disordered; sequence NAATSKSTTSESSDGTISDTSSVGGRPAKKRRRDDHV. The segment covering 608-618 has biased composition (basic residues); it reads PAKKRRRDDHV.

The protein localises to the nucleus. Its subcellular location is the cytoplasm. In terms of biological role, transcription factor that is involved in the response to heat shock, oxidative stress, and poor nutrient conditions. Controls expression of oxidative stress response genes such as ccp1, cat1, cat2, sod2; as well as of heat shock genes such as hsf1, hsp30 and hsp90. Negatively controls the expression of the fumiquinazoline (fmq) cluster via binding to the STRE motifs at the fmqA-D promoters. Plays a role in virulence. This is C2H2 finger domain transcription factor sebA from Aspergillus fumigatus (strain ATCC MYA-4609 / CBS 101355 / FGSC A1100 / Af293) (Neosartorya fumigata).